Reading from the N-terminus, the 83-residue chain is Kappa-theraphotoxin-Cg2a (83 aa).

The N-terminal stretch at 1-21 (MKGSAFAIILGLVVLCACSFA) is a signal peptide. The propeptide occupies 22 to 53 (EDEQDQFASPNELLRSMFLESRHELIPEVEGR). Cystine bridges form between C55–C69, C62–C74, and C68–C78. A Leucine amide modification is found at L82.

It belongs to the neurotoxin 30 (phrixotoxin) family. As to expression, expressed by the venom gland.

It is found in the secreted. In terms of biological role, inhibits voltage-gated potassium channels of the subtype Kv4.1/KCND1 with high affinity and shows weak effects on Kv4.2/KCND2 and Kv2.1/KCNB1 subtypes. The toxin modifies the gating behavior of the channel and may interact with the S3-S4 extracellular loop. In Chilobrachys guangxiensis (Chinese earth tiger tarantula), this protein is Kappa-theraphotoxin-Cg2a.